The following is a 555-amino-acid chain: GPI-anchor transamidase component PIGS (555 aa).

Residues 2–18 lie on the Cytoplasmic side of the membrane; that stretch reads AAAGAAATDLEVVRGKR. A cardiolipin contacts are provided by arginine 15 and arginine 18. The helical transmembrane segment at 19–39 threads the bilayer; that stretch reads SALFFAAVAILLGLPLWWKTT. Topologically, residues 40 to 517 are lumenal; it reads ETYRAPLPYS…LHLLYFPDDQ (478 aa). 2 N-linked (GlcNAc...) asparagine glycosylation sites follow: asparagine 267 and asparagine 370. The chain crosses the membrane as a helical span at residues 518–532; the sequence is KFAIYIPLFLPMAVP. The Cytoplasmic segment spans residues 533–555; sequence ILLSLVKIFQETRKSWKKPEKID.

This sequence belongs to the PIGS family. Heteropentamer. Part of the GPI-anchor transamidase complex, consisting of PIGK, PIGT, PIGS, PIGU and GAA1.

Its subcellular location is the endoplasmic reticulum membrane. Its pathway is glycolipid biosynthesis; glycosylphosphatidylinositol-anchor biosynthesis. In terms of biological role, component of the glycosylphosphatidylinositol-anchor (GPI-anchor) transamidase (GPI-T) complex that catalyzes the formation of the linkage between a proprotein and a GPI-anchor and participates in GPI anchored protein biosynthesis. This is GPI-anchor transamidase component PIGS from Mus musculus (Mouse).